Consider the following 227-residue polypeptide: Octanoyltransferase (227 aa).

Positions 35-222 (EAYENRIIMC…ELGRLLNEKK (188 aa)) constitute a BPL/LPL catalytic domain. Residues 80–87 (RGGDITYH), 152–154 (AIG), and 165–167 (GLA) each bind substrate. Cys183 serves as the catalytic Acyl-thioester intermediate.

This sequence belongs to the LipB family.

The protein localises to the cytoplasm. The catalysed reaction is octanoyl-[ACP] + L-lysyl-[protein] = N(6)-octanoyl-L-lysyl-[protein] + holo-[ACP] + H(+). It participates in protein modification; protein lipoylation via endogenous pathway; protein N(6)-(lipoyl)lysine from octanoyl-[acyl-carrier-protein]: step 1/2. In terms of biological role, catalyzes the transfer of endogenously produced octanoic acid from octanoyl-acyl-carrier-protein onto the lipoyl domains of lipoate-dependent enzymes. Lipoyl-ACP can also act as a substrate although octanoyl-ACP is likely to be the physiological substrate. The protein is Octanoyltransferase of Bacteroides thetaiotaomicron (strain ATCC 29148 / DSM 2079 / JCM 5827 / CCUG 10774 / NCTC 10582 / VPI-5482 / E50).